A 243-amino-acid polypeptide reads, in one-letter code: tRNA1(Val) (adenine(37)-N6)-methyltransferase (243 aa).

Belongs to the methyltransferase superfamily. tRNA (adenine-N(6)-)-methyltransferase family.

Its subcellular location is the cytoplasm. The enzyme catalyses adenosine(37) in tRNA1(Val) + S-adenosyl-L-methionine = N(6)-methyladenosine(37) in tRNA1(Val) + S-adenosyl-L-homocysteine + H(+). In terms of biological role, specifically methylates the adenine in position 37 of tRNA(1)(Val) (anticodon cmo5UAC). This chain is tRNA1(Val) (adenine(37)-N6)-methyltransferase, found in Shewanella loihica (strain ATCC BAA-1088 / PV-4).